A 263-amino-acid chain; its full sequence is LOB domain-containing protein 41 (263 aa).

The 107-residue stretch at 3-109 folds into the LOB domain; that stretch reads MSCNGCRVLR…VEAVMKGEPV (107 aa). The disordered stretch occupies residues 162-204; that stretch reads TVAIQAESEGKSDEASHDSSLSHQSEIVAAHEGESKESESNVS. Composition is skewed to basic and acidic residues over residues 169–178 and 190–200; these read SEGKSDEASH and AAHEGESKESE.

Belongs to the LOB domain-containing protein family. As to expression, expressed in young shoots, roots, stems, leaves and flowers.

This Arabidopsis thaliana (Mouse-ear cress) protein is LOB domain-containing protein 41 (LBD41).